A 571-amino-acid chain; its full sequence is Sialate:O-sulfotransferase 2 (571 aa).

Over 1 to 20 the chain is Cytoplasmic; that stretch reads MAKLWFKFQRCFRYFRRKPV. Residues 21-43 traverse the membrane as a helical segment; it reads RFFTLLAIYLTAGSLVFLHSGFV. At 44–571 the chain is on the extracellular side; that stretch reads GQPAVPQSQA…TGVPDAYGPR (528 aa). WSC domains are found at residues 133–225 and 236–330; these read KAKY…YRLQ and SAVF…YQTQ. 2 N-linked (GlcNAc...) asparagine glycosylation sites follow: Asn195 and Asn248.

The protein belongs to the WSCD family.

The protein resides in the golgi apparatus membrane. In terms of biological role, sialate:O-sulfotransferase that catalyzes 8-O-sulfation at the Sia-glycan level using 3'-phosphoadenosine 5'-phosphosulfate (PAPS) as a donor, forming 8-O-sulfated Sia (Sia8S)-glycans. Displays selectivity toward glycoproteins such as TF/transferrin. The protein is Sialate:O-sulfotransferase 2 (Wscd2) of Mus musculus (Mouse).